The primary structure comprises 516 residues: Lipid II flippase MurJ (516 aa).

The next 11 membrane-spanning stretches (helical) occupy residues 93–113, 133–153, 159–179, 188–208, 233–253, 275–295, 317–337, 358–378, 390–409, 448–468, and 483–503; these read WALAVLSVVGIAGASWVVFAV, IMFPYIVFISLTTLASGVLNT, LPAFAPVLLNVAFIAAAVFVA, ALAWAVIVGGVLQFLVQLPGL, VLAKMVPATFAVSVAQLSLII, LMEFPTALLGVALGTILLPSL, VTFLLAAPSALALFFFATPLT, LATYGIGLVGIILIKILAPGF, IAIGVLIVTQLSNYVFVPLI, FFVQLVGAALVLAGLMHWCAI, and IALMAACLVLFAALYFGMLWV.

Belongs to the MurJ/MviN family.

The protein resides in the cell inner membrane. The protein operates within cell wall biogenesis; peptidoglycan biosynthesis. Involved in peptidoglycan biosynthesis. Transports lipid-linked peptidoglycan precursors from the inner to the outer leaflet of the cytoplasmic membrane. This chain is Lipid II flippase MurJ, found in Burkholderia cenocepacia (strain ATCC BAA-245 / DSM 16553 / LMG 16656 / NCTC 13227 / J2315 / CF5610) (Burkholderia cepacia (strain J2315)).